The following is a 345-amino-acid chain: D-apiose dehydrogenase (345 aa).

15–16 (FF) is a binding site for NAD(+). The Mg(2+) site is built by W24, K25, V27, and A30. Residues D37, S79, 97 to 98 (QK), N126, and 165 to 167 (QPY) each bind NAD(+). K98 lines the substrate pocket. Substrate is bound by residues Q165, D178, H182, and Y232.

This sequence belongs to the Gfo/Idh/MocA family.

It catalyses the reaction D-apiofuranose + NAD(+) = D-apionolactone + NADH + H(+). It participates in carbohydrate metabolism. Its function is as follows. Involved in catabolism of D-apiose. Catalyzes oxidation of D-apiose to D-apionolactone. The sequence is that of D-apiose dehydrogenase from Rhizobium rhizogenes (strain K84 / ATCC BAA-868) (Agrobacterium radiobacter).